A 250-amino-acid polypeptide reads, in one-letter code: MPITANTLYRDSFNFFRNQLTSILMLALLTAFISVLLNQAFSPDVEQLKILSATEGDFAASAGMGIQEIIQQMTPEQQMVLLKVSAAATFSALVGNVLLVGGMLTLIRLVSQGQRISALRAIGASAPELPRLLLLLFICTLLIQLGLTLFVVPGVIMAIAFSLAPVITATDKKGVFASIKLSCKLAFANARVIVPAMMLWLAAKLLVLFMVSHLSVLTPNVASVVLTALSNLVSALLLIYLFRLYMLLRS.

Transmembrane regions (helical) follow at residues 23–43 (ILML…AFSP), 87–107 (AATF…LTLI), 132–152 (LLLL…LFVV), 156–176 (IMAI…KGVF), 192–212 (VIVP…FMVS), and 222–242 (ASVV…IYLF).

This sequence belongs to the UPF0259 family.

The protein resides in the cell inner membrane. This chain is UPF0259 membrane protein Spro_2675, found in Serratia proteamaculans (strain 568).